A 196-amino-acid chain; its full sequence is MAIDVKAIEEHIRGILIALGDNPEREGLKNTPKRVAKMYEEVFKGMCYSNDEIAEMFNVTFEDDLCINDNENDMVFMKEIEIFSHCEHHLALMYNMKVAIAYIPKKKIIGLSKIARIADMVGRRLQLQERIGSDIAEILQKITDSEDVAVIIEGEHGCMTTRGIKKPGTKTITTTLRGKFNTDPIVSNKLMMLYTK.

3 residues coordinate Zn(2+): Cys-86, His-89, and Cys-158.

This sequence belongs to the GTP cyclohydrolase I family. Toroid-shaped homodecamer, composed of two pentamers of five dimers.

It carries out the reaction GTP + H2O = 7,8-dihydroneopterin 3'-triphosphate + formate + H(+). The protein operates within cofactor biosynthesis; 7,8-dihydroneopterin triphosphate biosynthesis; 7,8-dihydroneopterin triphosphate from GTP: step 1/1. The protein is GTP cyclohydrolase 1 of Clostridium botulinum (strain ATCC 19397 / Type A).